The primary structure comprises 52 residues: ATP synthase protein 8 (52 aa).

Residues 10-30 (FLMSLMIMMILIFMTINFYFF) form a helical membrane-spanning segment.

Belongs to the ATPase protein 8 family. In terms of assembly, F-type ATPases have 2 components, CF(1) - the catalytic core - and CF(0) - the membrane proton channel.

It is found in the mitochondrion membrane. Mitochondrial membrane ATP synthase (F(1)F(0) ATP synthase or Complex V) produces ATP from ADP in the presence of a proton gradient across the membrane which is generated by electron transport complexes of the respiratory chain. F-type ATPases consist of two structural domains, F(1) - containing the extramembraneous catalytic core and F(0) - containing the membrane proton channel, linked together by a central stalk and a peripheral stalk. During catalysis, ATP synthesis in the catalytic domain of F(1) is coupled via a rotary mechanism of the central stalk subunits to proton translocation. Part of the complex F(0) domain. Minor subunit located with subunit a in the membrane. This chain is ATP synthase protein 8 (MT-ATP8), found in Rhipicephalus sanguineus (Brown dog tick).